The sequence spans 182 residues: Methyl-CpG-binding domain-containing protein 5 (182 aa).

2 disordered regions span residues 1–56 (MSNG…GTVD) and 80–126 (HGTP…KPLN). The region spanning 25–101 (KRATPGDDNW…ENGDSHSEHS (77 aa)) is the MBD domain. Residues 92-105 (ENGDSHSEHSEGRG) show a composition bias toward basic and acidic residues. Positions 106-115 (SARRQTKSNK) are enriched in basic residues.

As to quaternary structure, homodimer and heterodimer with MBD6. Interacts with DDM1 via its MBD domain. As to expression, mostly expressed in flowers, and, to a lower extent, in seedlings, buds, stems and mature seeds, but barely in roots, exclusively in root meristem cells at tips (at protein level).

The protein localises to the nucleus. It is found in the chromosome. Its function is as follows. Transcriptional regulator that binds CpG islands in promoters where the DNA is methylated at position 5 of cytosine within CpG dinucleotides. In addition, binds specifically methylated m(5)CpNpN but not m(5)CpNpG (N is A, T or C). Plays probably a role in gene silencing. This chain is Methyl-CpG-binding domain-containing protein 5 (MBD5), found in Arabidopsis thaliana (Mouse-ear cress).